A 141-amino-acid polypeptide reads, in one-letter code: Cystatin (141 aa).

Residues 1–26 form the signal peptide; sequence MVHSQLPVAAPLRLLCALLLLPSATM. Residues 29-129 enclose the Cystatin domain; it reads GGLYPRSVTD…CHFQVWSRPW (101 aa). A Secondary area of contact motif is present at residues 73–77; the sequence is QVVTG. 2 cysteine pairs are disulfide-bonded: Cys91–Cys107 and Cys120–Cys140.

Belongs to the cystatin family. Expressed by the venom gland at an extremely low level (at protein level).

Its subcellular location is the secreted. In terms of biological role, inhibits various C1 cysteine proteases including cathepsin L, papain and cathepsin B. This protein has no toxic activity and its function in the venom is unknown. It may play a role as a housekeeping or regulatory protein. This chain is Cystatin, found in Tropidechis carinatus (Australian rough-scaled snake).